The primary structure comprises 220 residues: Deoxyribose-phosphate aldolase (220 aa).

Catalysis depends on Asp89, which acts as the Proton donor/acceptor. Lys151 serves as the catalytic Schiff-base intermediate with acetaldehyde. Lys180 (proton donor/acceptor) is an active-site residue.

The protein belongs to the DeoC/FbaB aldolase family. DeoC type 1 subfamily.

The protein localises to the cytoplasm. The enzyme catalyses 2-deoxy-D-ribose 5-phosphate = D-glyceraldehyde 3-phosphate + acetaldehyde. Its pathway is carbohydrate degradation; 2-deoxy-D-ribose 1-phosphate degradation; D-glyceraldehyde 3-phosphate and acetaldehyde from 2-deoxy-alpha-D-ribose 1-phosphate: step 2/2. In terms of biological role, catalyzes a reversible aldol reaction between acetaldehyde and D-glyceraldehyde 3-phosphate to generate 2-deoxy-D-ribose 5-phosphate. The polypeptide is Deoxyribose-phosphate aldolase (Streptococcus pneumoniae (strain Hungary19A-6)).